The sequence spans 414 residues: Succinylornithine transaminase (414 aa).

Position 260 is an N6-(pyridoxal phosphate)lysine (Lys-260).

The protein belongs to the class-III pyridoxal-phosphate-dependent aminotransferase family. AstC subfamily. Requires pyridoxal 5'-phosphate as cofactor.

The enzyme catalyses N(2)-succinyl-L-ornithine + 2-oxoglutarate = N-succinyl-L-glutamate 5-semialdehyde + L-glutamate. The protein operates within amino-acid degradation; L-arginine degradation via AST pathway; L-glutamate and succinate from L-arginine: step 3/5. In terms of biological role, catalyzes the transamination of N(2)-succinylornithine and alpha-ketoglutarate into N(2)-succinylglutamate semialdehyde and glutamate. Can also act as an acetylornithine aminotransferase. This Yersinia pestis bv. Antiqua (strain Antiqua) protein is Succinylornithine transaminase.